An 85-amino-acid chain; its full sequence is Sec-independent protein translocase protein TatA (85 aa).

Residues 1–21 (MGGISIWQLLIIALIVVLLFG) traverse the membrane as a helical segment. A disordered region spans residues 43-85 (MSSEEDKKALEDAEAAKPVQTAQTAQPTQQATEKKPESNKEQA). Residues 46-57 (EEDKKALEDAEA) show a composition bias toward basic and acidic residues. Residues 58-73 (AKPVQTAQTAQPTQQA) show a composition bias toward low complexity. The span at 74 to 85 (TEKKPESNKEQA) shows a compositional bias: basic and acidic residues.

Belongs to the TatA/E family. The Tat system comprises two distinct complexes: a TatABC complex, containing multiple copies of TatA, TatB and TatC subunits, and a separate TatA complex, containing only TatA subunits. Substrates initially bind to the TatABC complex, which probably triggers association of the separate TatA complex to form the active translocon.

The protein localises to the cell inner membrane. Functionally, part of the twin-arginine translocation (Tat) system that transports large folded proteins containing a characteristic twin-arginine motif in their signal peptide across membranes. TatA could form the protein-conducting channel of the Tat system. The polypeptide is Sec-independent protein translocase protein TatA (Shewanella sp. (strain MR-4)).